Here is a 227-residue protein sequence, read N- to C-terminus: Probable FKBP-type 25 kDa peptidyl-prolyl cis-trans isomerase (227 aa).

The region spanning 144 to 227 is the PPIase FKBP-type domain; that stretch reads ATQVHVRYRG…VFEIDLLGFR (84 aa).

It belongs to the FKBP-type PPIase family.

The enzyme catalyses [protein]-peptidylproline (omega=180) = [protein]-peptidylproline (omega=0). In terms of biological role, PPIases accelerate the folding of proteins. The protein is Probable FKBP-type 25 kDa peptidyl-prolyl cis-trans isomerase (fkl) of Pseudomonas aeruginosa (strain ATCC 15692 / DSM 22644 / CIP 104116 / JCM 14847 / LMG 12228 / 1C / PRS 101 / PAO1).